We begin with the raw amino-acid sequence, 162 residues long: Autophagy-related protein 8 (162 aa).

A compositionally biased stretch (basic and acidic residues) spans 1-27 (MRSKFKDEHPFEKRKAEAERIRQKYSD). Positions 1–42 (MRSKFKDEHPFEKRKAEAERIRQKYSDRIPPSPHSPASRLIG) are disordered. Gly-157 carries Phosphatidylethanolamine amidated glycine lipidation. The propeptide at 158–162 (GFETA) is removed in mature form.

The protein belongs to the ATG8 family.

The protein localises to the cytoplasmic vesicle. It localises to the autophagosome membrane. Its subcellular location is the vacuole membrane. Ubiquitin-like modifier involved in autophagosome formation. With ATG4, mediates the delivery of the autophagosomes to the vacuole via the microtubule cytoskeleton. Required for selective autophagic degradation of the nucleus (nucleophagy) as well as for mitophagy which contributes to regulate mitochondrial quantity and quality by eliminating the mitochondria to a basal level to fulfill cellular energy requirements and preventing excess ROS production. Also participates in membrane fusion events that take place in the early secretory pathway. Also involved in endoplasmic reticulum-specific autophagic process and is essential for the survival of cells subjected to severe ER stress. The ATG8-PE conjugate mediates tethering between adjacent membranes and stimulates membrane hemifusion, leading to expansion of the autophagosomal membrane during autophagy. In Colletotrichum higginsianum (strain IMI 349063) (Crucifer anthracnose fungus), this protein is Autophagy-related protein 8.